The chain runs to 194 residues: Large ribosomal subunit protein bL25 (194 aa).

This sequence belongs to the bacterial ribosomal protein bL25 family. CTC subfamily. As to quaternary structure, part of the 50S ribosomal subunit; part of the 5S rRNA/L5/L18/L25 subcomplex. Contacts the 5S rRNA. Binds to the 5S rRNA independently of L5 and L18.

Functionally, this is one of the proteins that binds to the 5S RNA in the ribosome where it forms part of the central protuberance. This is Large ribosomal subunit protein bL25 from Thermobifida fusca (strain YX).